Here is a 475-residue protein sequence, read N- to C-terminus: UDP-N-acetylmuramate--L-alanine ligase (475 aa).

An ATP-binding site is contributed by 114–120 (GTHGKTT).

Belongs to the MurCDEF family.

Its subcellular location is the cytoplasm. It carries out the reaction UDP-N-acetyl-alpha-D-muramate + L-alanine + ATP = UDP-N-acetyl-alpha-D-muramoyl-L-alanine + ADP + phosphate + H(+). It participates in cell wall biogenesis; peptidoglycan biosynthesis. Its function is as follows. Cell wall formation. The sequence is that of UDP-N-acetylmuramate--L-alanine ligase from Bartonella bacilliformis (strain ATCC 35685 / KC583 / Herrer 020/F12,63).